The chain runs to 130 residues: ER membrane protein complex subunit 5 (130 aa).

Topologically, residues 1–3 (MAS) are cytoplasmic. The helical transmembrane segment at 4–22 (SFWKGVVGIGLFALAHAAF) threads the bilayer. Topologically, residues 23–43 (SAAQHRSYMRLTEKENETLPI) are lumenal. Residues 44 to 63 (DIVLQTLLSFVITCYGIVHI) form a helical membrane-spanning segment. The Cytoplasmic segment spans residues 64–130 (SGEFKDMDAS…LRLRKLENFH (67 aa)).

It belongs to the membrane magnesium transporter (TC 1.A.67) family. In terms of assembly, component of the ER membrane protein complex (EMC).

Its subcellular location is the endoplasmic reticulum membrane. The protein localises to the golgi apparatus membrane. It is found in the early endosome membrane. Part of the endoplasmic reticulum membrane protein complex (EMC) that enables the energy-independent insertion into endoplasmic reticulum membranes of newly synthesized membrane proteins. Preferentially accommodates proteins with transmembrane domains that are weakly hydrophobic or contain destabilizing features such as charged and aromatic residues. Involved in the cotranslational insertion of multi-pass membrane proteins in which stop-transfer membrane-anchor sequences become ER membrane spanning helices. It is also required for the post-translational insertion of tail-anchored/TA proteins in endoplasmic reticulum membranes. By mediating the proper cotranslational insertion of N-terminal transmembrane domains in an N-exo topology, with translocated N-terminus in the lumen of the ER, controls the topology of multi-pass membrane proteins like the G protein-coupled receptors. By regulating the insertion of various proteins in membranes, it is indirectly involved in many cellular processes. May be involved in Mg(2+) transport. This Danio rerio (Zebrafish) protein is ER membrane protein complex subunit 5.